We begin with the raw amino-acid sequence, 93 residues long: Large ribosomal subunit protein uL23 (93 aa).

This sequence belongs to the universal ribosomal protein uL23 family. Part of the 50S ribosomal subunit. Contacts protein L29, and trigger factor when it is bound to the ribosome.

One of the early assembly proteins it binds 23S rRNA. One of the proteins that surrounds the polypeptide exit tunnel on the outside of the ribosome. Forms the main docking site for trigger factor binding to the ribosome. The sequence is that of Large ribosomal subunit protein uL23 from Wolinella succinogenes (strain ATCC 29543 / DSM 1740 / CCUG 13145 / JCM 31913 / LMG 7466 / NCTC 11488 / FDC 602W) (Vibrio succinogenes).